Consider the following 354-residue polypeptide: Phospho-N-acetylmuramoyl-pentapeptide-transferase (354 aa).

Helical transmembrane passes span 27–47 (ATLL…INML), 73–93 (TMGG…WMDV), 97–117 (LVWA…LDDY), 138–158 (FVVA…YVPV), 162–182 (LYVP…VGAG), 193–213 (GLAI…AYLA), 230–250 (AGEL…FLWF), 256–276 (AVFM…VIAV), 282–302 (IVLA…IVQV), and 331–351 (TVVI…LATL).

It belongs to the glycosyltransferase 4 family. MraY subfamily. Mg(2+) is required as a cofactor.

Its subcellular location is the cell inner membrane. The enzyme catalyses UDP-N-acetyl-alpha-D-muramoyl-L-alanyl-gamma-D-glutamyl-meso-2,6-diaminopimeloyl-D-alanyl-D-alanine + di-trans,octa-cis-undecaprenyl phosphate = di-trans,octa-cis-undecaprenyl diphospho-N-acetyl-alpha-D-muramoyl-L-alanyl-D-glutamyl-meso-2,6-diaminopimeloyl-D-alanyl-D-alanine + UMP. Its pathway is cell wall biogenesis; peptidoglycan biosynthesis. Catalyzes the initial step of the lipid cycle reactions in the biosynthesis of the cell wall peptidoglycan: transfers peptidoglycan precursor phospho-MurNAc-pentapeptide from UDP-MurNAc-pentapeptide onto the lipid carrier undecaprenyl phosphate, yielding undecaprenyl-pyrophosphoryl-MurNAc-pentapeptide, known as lipid I. The polypeptide is Phospho-N-acetylmuramoyl-pentapeptide-transferase (Novosphingobium aromaticivorans (strain ATCC 700278 / DSM 12444 / CCUG 56034 / CIP 105152 / NBRC 16084 / F199)).